We begin with the raw amino-acid sequence, 180 residues long: tRNA (cytidine(56)-2'-O)-methyltransferase (180 aa).

Residues leucine 85, 114 to 118 (GAEKV), and 132 to 139 (VGNQPHSE) each bind S-adenosyl-L-methionine.

It belongs to the aTrm56 family. Homodimer.

It is found in the cytoplasm. The catalysed reaction is cytidine(56) in tRNA + S-adenosyl-L-methionine = 2'-O-methylcytidine(56) in tRNA + S-adenosyl-L-homocysteine + H(+). In terms of biological role, specifically catalyzes the AdoMet-dependent 2'-O-ribose methylation of cytidine at position 56 in tRNAs. This chain is tRNA (cytidine(56)-2'-O)-methyltransferase, found in Thermococcus kodakarensis (strain ATCC BAA-918 / JCM 12380 / KOD1) (Pyrococcus kodakaraensis (strain KOD1)).